Reading from the N-terminus, the 154-residue chain is Deoxyuridine 5'-triphosphate nucleotidohydrolase (154 aa).

Residues 64–66 (RSG), Asn77, 81–83 (TVD), and Lys91 contribute to the substrate site.

It belongs to the dUTPase family. In terms of assembly, homotrimer. The cofactor is Mg(2+).

The enzyme catalyses dUTP + H2O = dUMP + diphosphate + H(+). It functions in the pathway pyrimidine metabolism; dUMP biosynthesis; dUMP from dCTP (dUTP route): step 2/2. In terms of biological role, this enzyme is involved in nucleotide metabolism: it produces dUMP, the immediate precursor of thymidine nucleotides and it decreases the intracellular concentration of dUTP so that uracil cannot be incorporated into DNA. The polypeptide is Deoxyuridine 5'-triphosphate nucleotidohydrolase (Mycobacterium leprae (strain Br4923)).